The following is a 1851-amino-acid chain: Protein lap4 (1851 aa).

16 LRR repeats span residues 38–59 (TLEELFLDANHIRDLPKNFFRL), 61–82 (RLRKLGLSDNEIGRLPPDIQNF), 84–105 (NLVELDVSRNDIPDIPDDIKHL), 107–128 (SLQVADFSSNPIPKLPSGFSQL), 130–152 (NLTVLGLNDMSLTTLPADFGSLT), 153–174 (QLESLELRENLLKHLPETISQL), 176–197 (KLKRLDLGDNEIEDLPPYLGYL), 199–220 (GLHELWLDHNQLQRLPPELGLL), 222–243 (KLTYLDVSENRLEELPNEISGL), 245–267 (SLTDLDLAQNLLEALPDGIAKLS), 268–289 (RLTILKLDQNRLQRLNDTLGNC), 291–312 (NMQELILTENFLSELPASIGQM), 314–335 (KLNNLNVDRNALEYLPLEIGQC), 337–358 (NLGVLSLRDNKLKKLPPELGNC), 360–382 (VLHVLDVSGNQLLYLPYSLVNLQ), and 383–403 (LKAVWLSENQSQPLLTFQPDT). 3 disordered regions span residues 427-474 (PARD…KDLK), 584-641 (VGGS…VQHL), and 656-719 (SQER…PDNL). Serine 433 and serine 435 each carry phosphoserine. Positions 438-461 (FEEREPSRTVVKFSEEATQEKETP) are enriched in basic and acidic residues. Positions 471-492 (KDLKAKAQKLKVERSRNEEHAN) form a coiled coil. The segment covering 589–601 (EVQDDDEQEDEFE) has biased composition (acidic residues). Basic residues predominate over residues 620–639 (RPPKLHRRDTPHHLKNKRVQ). Positions 656–672 (SQERNDTTPQHSLSGKV) are enriched in polar residues. Residues 676–686 (IEEEEQLEVEQ) are compositionally biased toward acidic residues. The stretch at 677–693 (EEEEQLEVEQEQQQQQQ) forms a coiled coil. Phosphoserine is present on residues serine 700, serine 702, and serine 705. The PDZ 1 domain maps to 731 to 818 (EIHIERTAAG…VLVLVVQREV (88 aa)). Serine 834 and serine 837 each carry phosphoserine. One can recognise a PDZ 2 domain in the interval 929–1019 (HTTLIRDQIG…FVRLVLQREY (91 aa)). A phosphoserine mark is found at serine 1031 and serine 1041. The tract at residues 1067–1150 (LATTTPTPKP…EAQPSSLRPL (84 aa)) is disordered. Polar residues-rich tracts occupy residues 1080–1097 (ASISNNNNTLPSSKTNGF) and 1132–1149 (GSTTSGDSGEAQPSSLRP). 2 PDZ domains span residues 1239–1329 (EVVL…QHDP) and 1336–1428 (EVLL…CKGY). A compositionally biased stretch (polar residues) spans 1448-1467 (NSSASCSGGSRQGSRASETG). Residues 1448–1485 (NSSASCSGGSRQGSRASETGSELSQSQSVSSLDHEEDE) form a disordered region. Residues 1468–1478 (SELSQSQSVSS) show a composition bias toward low complexity. Phosphoserine is present on residues serine 1475, serine 1477, and serine 1478. Threonine 1599 is subject to Phosphothreonine. Over residues 1647-1669 (AESANSAGAPSPAVPASTPGSAP) the composition is skewed to low complexity. 2 disordered regions span residues 1647–1751 (AESA…KVFS) and 1772–1851 (LRRD…VFRS). Basic and acidic residues predominate over residues 1725 to 1751 (VSDKKRFFESAMEDQHKPTQKTDKVFS). The stretch at 1753-1790 (LSKDEVEKLRQEEERKIATLRRDKNSRLLDAANDNIDK) forms a coiled coil. Over residues 1807–1816 (DDNDDSDQEE) the composition is skewed to acidic residues. Basic and acidic residues predominate over residues 1831 to 1851 (HFDDAEDMRNPLDEIEAVFRS).

It belongs to the LAP (LRR and PDZ) protein family. As to expression, during germ band extension, expression of isoform A occurs predominantly in neuroblasts derived from the neuro-ectoderm and later is restricted to CNS neurons and pole cells. Isoform C is strongly expressed in PNS and a subset of CNS neurons. In the adult, expressed in third antennal segment and maxillary palps, major olfactory organs and in Johnstons organ in the second antennal segment. Expression is also observed in cortical regions of the brain. Isoforms expressed in epithelia are coexpressed with dlg1 throughout development.

It is found in the cytoplasm. It localises to the apicolateral cell membrane. The protein localises to the cell junction. The protein resides in the septate junction. Its function is as follows. Required for polarization of the embryonic, imaginal disk and follicular epithelia. Specifically restricts apical membrane determinants to the apical cell surface; acts to exclude crb from the basolateral domain and define adherens junction position. Regulates cellular growth and differentiation; acts as a tumor suppressor. Essential for odor guided behavior. This Drosophila melanogaster (Fruit fly) protein is Protein lap4.